Consider the following 149-residue polypeptide: Deoxyuridine 5'-triphosphate nucleotidohydrolase (149 aa).

Residues 68–70 (RSG), Asn81, and 85–87 (LID) each bind substrate.

It belongs to the dUTPase family. Mg(2+) serves as cofactor.

The catalysed reaction is dUTP + H2O = dUMP + diphosphate + H(+). The protein operates within pyrimidine metabolism; dUMP biosynthesis; dUMP from dCTP (dUTP route): step 2/2. Functionally, this enzyme is involved in nucleotide metabolism: it produces dUMP, the immediate precursor of thymidine nucleotides and it decreases the intracellular concentration of dUTP so that uracil cannot be incorporated into DNA. The protein is Deoxyuridine 5'-triphosphate nucleotidohydrolase of Nitrosomonas eutropha (strain DSM 101675 / C91 / Nm57).